The chain runs to 332 residues: Acryloyl-coenzyme A reductase (332 aa).

Position 38 (cysteine 38) interacts with Zn(2+). Tyrosine 39 contacts NADP(+). Residues histidine 60, aspartate 90, cysteine 93, cysteine 96, cysteine 104, and cysteine 146 each contribute to the Zn(2+) site. Residues 172 to 175 and 194 to 196 contribute to the NADP(+) site; these read SGGV and TTS.

This sequence belongs to the zinc-containing alcohol dehydrogenase family. In terms of assembly, monomer. Zn(2+) serves as cofactor.

It carries out the reaction propanoyl-CoA + NADP(+) = acryloyl-CoA + NADPH + H(+). Its function is as follows. Plays a role in autotrophic carbon fixation via the 3-hydroxypropionate/4-hydroxybutyrate cycle. Catalyzes the acryloyl-CoA dependent NADPH oxidation and formation of propionyl-CoA. This Metallosphaera sedula (strain ATCC 51363 / DSM 5348 / JCM 9185 / NBRC 15509 / TH2) protein is Acryloyl-coenzyme A reductase.